Consider the following 389-residue polypeptide: (+)-bicyclogermacrene synthase TS4 (389 aa).

Residues Asp-136, Glu-140, His-284, Gly-288, and Asp-292 each coordinate Mg(2+). Residues 136–140 (DEVCE) carry the DDxx(x)D/E motif motif. An NDxxSxxxD/E motif motif is present at residues 284–292 (HDFIGLQKD).

It belongs to the terpene synthase family.

It carries out the reaction (2E,6E)-farnesyl diphosphate = bicyclogermacrene + diphosphate. Functionally, catalyzes the cyclization of trans,trans-farnesyl diphosphate (FPP) to the bicyclic sesquiterpene bicyclogermacrene. The polypeptide is (+)-bicyclogermacrene synthase TS4 (Penicillium expansum (Blue mold rot fungus)).